The following is a 111-amino-acid chain: MKGSKSHLVFTLLQVSQLNVFLFFLGFLLPLFLGLFVSLRSLALALSSGWFIMDLILFRTFPEAELYPAVIGKPSGLGLTEAFEFISIFFPDVQQTERNIKYNWERCFNGE.

Helical transmembrane passes span 18–38 and 42–62; these read LNVFLFFLGFLLPLFLGLFVS and LALALSSGWFIMDLILFRTFP.

The protein localises to the membrane. This is an uncharacterized protein from Saccharomyces cerevisiae (strain ATCC 204508 / S288c) (Baker's yeast).